The primary structure comprises 344 residues: Methionine import ATP-binding protein MetN (344 aa).

The 240-residue stretch at 2-241 (IEINQVNKVF…PKTELAHDFI (240 aa)) folds into the ABC transporter domain. 38–45 (GSSGAGKS) provides a ligand contact to ATP.

This sequence belongs to the ABC transporter superfamily. Methionine importer (TC 3.A.1.24) family. In terms of assembly, the complex is composed of two ATP-binding proteins (MetN), two transmembrane proteins (MetI) and a solute-binding protein (MetQ).

The protein resides in the cell inner membrane. The enzyme catalyses L-methionine(out) + ATP + H2O = L-methionine(in) + ADP + phosphate + H(+). The catalysed reaction is D-methionine(out) + ATP + H2O = D-methionine(in) + ADP + phosphate + H(+). Part of the ABC transporter complex MetNIQ involved in methionine import. Responsible for energy coupling to the transport system. This is Methionine import ATP-binding protein MetN from Vibrio vulnificus (strain YJ016).